A 254-amino-acid chain; its full sequence is MRLTALTAFADNYIWMLIDDDGAAVVVDPGDAAPVLALADQGLRVDSILLTHHHDDHIGGVPALQARFPGVRVIAPVEERIPTATERVGEGERVQALGRMFHVLSVPGHTRSHIAFHTAEHLFSGDSLFSLGCGRLFEGTPSQLLASMLKLGALPAQLLLCCAHEYTVSNAVFARHVDPANAALWQRQEEALAMRRDDRSTLPVTLANEFDCNPFLRVHTAPIRASVSAHLGRDVVDDVDVMAGLRHWKDGFRA.

Positions 52, 54, 56, 57, 109, 126, and 164 each coordinate Zn(2+).

Belongs to the metallo-beta-lactamase superfamily. Glyoxalase II family. In terms of assembly, monomer. Requires Zn(2+) as cofactor.

It catalyses the reaction an S-(2-hydroxyacyl)glutathione + H2O = a 2-hydroxy carboxylate + glutathione + H(+). It participates in secondary metabolite metabolism; methylglyoxal degradation; (R)-lactate from methylglyoxal: step 2/2. Thiolesterase that catalyzes the hydrolysis of S-D-lactoyl-glutathione to form glutathione and D-lactic acid. The sequence is that of Hydroxyacylglutathione hydrolase from Stenotrophomonas maltophilia (strain R551-3).